The chain runs to 945 residues: Leucine--tRNA ligase (945 aa).

The short motif at proline 43–histidine 53 is the 'HIGH' region element. Residues lysine 638–serine 642 carry the 'KMSKS' region motif. Lysine 641 contacts ATP.

It belongs to the class-I aminoacyl-tRNA synthetase family.

The protein localises to the cytoplasm. It carries out the reaction tRNA(Leu) + L-leucine + ATP = L-leucyl-tRNA(Leu) + AMP + diphosphate. The sequence is that of Leucine--tRNA ligase from Pyrobaculum islandicum (strain DSM 4184 / JCM 9189 / GEO3).